The chain runs to 78 residues: Translation initiation factor IF-1, chloroplastic (78 aa).

The S1-like domain maps to 1 to 72 (MEKQNLIDME…TKGRITYRLR (72 aa)).

The protein belongs to the IF-1 family. As to quaternary structure, component of the 30S ribosomal translation pre-initiation complex which assembles on the 30S ribosome in the order IF-2 and IF-3, IF-1 and N-formylmethionyl-tRNA(fMet); mRNA recruitment can occur at any time during PIC assembly.

It is found in the plastid. The protein localises to the chloroplast. Functionally, one of the essential components for the initiation of protein synthesis. Stabilizes the binding of IF-2 and IF-3 on the 30S subunit to which N-formylmethionyl-tRNA(fMet) subsequently binds. Helps modulate mRNA selection, yielding the 30S pre-initiation complex (PIC). Upon addition of the 50S ribosomal subunit IF-1, IF-2 and IF-3 are released leaving the mature 70S translation initiation complex. The sequence is that of Translation initiation factor IF-1, chloroplastic from Anthoceros angustus (Hornwort).